A 112-amino-acid polypeptide reads, in one-letter code: Putative pterin-4-alpha-carbinolamine dehydratase (112 aa).

This sequence belongs to the pterin-4-alpha-carbinolamine dehydratase family.

The catalysed reaction is (4aS,6R)-4a-hydroxy-L-erythro-5,6,7,8-tetrahydrobiopterin = (6R)-L-erythro-6,7-dihydrobiopterin + H2O. The chain is Putative pterin-4-alpha-carbinolamine dehydratase from Shewanella loihica (strain ATCC BAA-1088 / PV-4).